The primary structure comprises 276 residues: Merozoite surface protein 2 (276 aa).

A signal peptide spans 1–20; sequence MKVIKTLSIINFFIFVTFNI. N-linked (GlcNAc...) asparagine glycans are attached at residues Asn-22 and Asn-36. Residues 44 to 202 are polymorphic region; the sequence is AESNPSTGAG…EQTESPELQS (159 aa). The disordered stretch occupies residues 44 to 242; that stretch reads AESNPSTGAG…CTDGNKENCG (199 aa). Residues 51 to 90 are compositionally biased toward gly residues; that stretch reads GAGGSGSAGGSGSAGGSGSAGGSGSAGGSGSAGSGDGNGA. 5 repeat units span residues 53 to 58, 59 to 64, 65 to 70, 71 to 76, and 77 to 82. Residues 53-82 are 5 X 6 AA tandem repeats of G-G-S-G-S-A; the sequence is GGSGSAGGSGSAGGSGSAGGSGSAGGSGSA. Residues 91–127 show a composition bias toward low complexity; it reads NPGADAERSPSTPATTTTTTTTNDAEASTSTSSENPN. Composition is skewed to polar residues over residues 143–169, 176–187, and 194–204; these read KPNQ…NVPP, KSPTAQPEQAEN, and QTESPELQSAP. N-linked (GlcNAc...) asparagine glycosylation occurs at Asn-153. Asn-225 is a glycosylation site (N-linked (GlcNAc...) asparagine). Residues 229–238 show a composition bias toward basic and acidic residues; sequence SQKECTDGNK. A disulfide bond links Cys-233 and Cys-241. An N-linked (GlcNAc...) asparagine glycan is attached at Asn-250. A lipid anchor (GPI-anchor amidated asparagine) is attached at Asn-250. Positions 251–276 are cleaved as a propeptide — removed in mature form; sequence SSNIASINKFVVLISATLVLSFAIFI.

Its subcellular location is the cell membrane. Its function is as follows. May play a role in the merozoite attachment to the erythrocyte. The protein is Merozoite surface protein 2 of Plasmodium falciparum (isolate 7G8).